The primary structure comprises 1190 residues: Isoleucine--tRNA ligase, cytoplasmic (1190 aa).

The short motif at 49–59 (PFATGLPHYGH) is the 'HIGH' region element. Positions 271–299 (DKPKAKLSNGPAGDTKKANPKAKGAKPES) are disordered. The 'KMSKS' region motif lies at 632–636 (KMAKK). K635 contributes to the ATP binding site.

Belongs to the class-I aminoacyl-tRNA synthetase family.

The protein resides in the cytoplasm. The protein localises to the cytosol. The enzyme catalyses tRNA(Ile) + L-isoleucine + ATP = L-isoleucyl-tRNA(Ile) + AMP + diphosphate. This chain is Isoleucine--tRNA ligase, cytoplasmic, found in Arabidopsis thaliana (Mouse-ear cress).